The chain runs to 382 residues: 1-deoxy-D-xylulose 5-phosphate reductoisomerase (382 aa).

NADPH is bound by residues T10, G11, S12, I13, G36, and N122. K123 lines the 1-deoxy-D-xylulose 5-phosphate pocket. E124 serves as a coordination point for NADPH. Residue D148 participates in Mn(2+) binding. Positions 149, 150, 174, and 197 each coordinate 1-deoxy-D-xylulose 5-phosphate. E150 provides a ligand contact to Mn(2+). NADPH is bound at residue G203. Positions 210, 215, 216, and 219 each coordinate 1-deoxy-D-xylulose 5-phosphate. E219 contributes to the Mn(2+) binding site.

This sequence belongs to the DXR family. Mg(2+) serves as cofactor. Mn(2+) is required as a cofactor.

The catalysed reaction is 2-C-methyl-D-erythritol 4-phosphate + NADP(+) = 1-deoxy-D-xylulose 5-phosphate + NADPH + H(+). It participates in isoprenoid biosynthesis; isopentenyl diphosphate biosynthesis via DXP pathway; isopentenyl diphosphate from 1-deoxy-D-xylulose 5-phosphate: step 1/6. Catalyzes the NADPH-dependent rearrangement and reduction of 1-deoxy-D-xylulose-5-phosphate (DXP) to 2-C-methyl-D-erythritol 4-phosphate (MEP). This is 1-deoxy-D-xylulose 5-phosphate reductoisomerase from Chlorobaculum tepidum (strain ATCC 49652 / DSM 12025 / NBRC 103806 / TLS) (Chlorobium tepidum).